The primary structure comprises 300 residues: MPSSFVSQLSPSLFSILREQLEKKGFTISIPPHTVFQGRSPTVSCTVYQSGKIVVQGKGTQEFVEFFLEPEILQTFSSQNVQQDLRSRIGVDESGKGDFFGPLCTAGVYASSPQAIEALYKTSICDSKLIPDAKILSLAQNIRSLCACKVITLFPEKYNALYANFQNLNSLLAWTHATIIDNLAPHPAGAVFAISDQFASSERVLLQAVRKKRSDIELIQRHRAEQDVVVAAASILAREAFLSSIHALESQYQIRLLKGASGKVKQRAKEILHNKGQVVLEKVCKTHFKTFNEVLGSGNQ.

One can recognise an RNase H type-2 domain in the interval 86–300 (RSRIGVDESG…FNEVLGSGNQ (215 aa)). A divalent metal cation-binding residues include aspartate 92, glutamate 93, and aspartate 196.

Belongs to the RNase HII family. RnhC subfamily. Mn(2+) is required as a cofactor. The cofactor is Mg(2+).

It is found in the cytoplasm. The enzyme catalyses Endonucleolytic cleavage to 5'-phosphomonoester.. In terms of biological role, endonuclease that specifically degrades the RNA of RNA-DNA hybrids. The protein is Ribonuclease HIII of Chlamydia trachomatis serovar L2 (strain ATCC VR-902B / DSM 19102 / 434/Bu).